Here is a 439-residue protein sequence, read N- to C-terminus: MKKPLRWLAALTALLLPLSALAQQQGLTIDIVGGSASATPIAVIPMPYQGSGTAPQTDVSAVVGADLDRSGQFRTLPAAQIVEKPTRGTEVQFQTWRTLKQNYIVVGRVMDAGEGAYRVEYELFDVAKGERMLGLAMTARANAMRDVSHQMADAIYEKITGVRGAFWTRIAYVTASGKGGAMRYALMVADSDGYNPQTIVRSAEPLLSPNWSPDGKKLAYVSFERGNSSIYLQDIATGARELVSSFRGINGAPSFSPDGRRLALALSRSGNPEIYVMDLGSKQLTQLTNHFGIDTEPTWAPDGGSIYFTSDRGGRPQIYQVAASGGSANRVTFQGNYNATASVSFDGKKIAVAQGSGNTYRIAMMDRSLGSPSWSTLSPGSLDESPSFAPNASMVLYAAREGGRGVLYAVSSDARVRQRLVLADGDVREPAWGPYRTAH.

The signal sequence occupies residues 1-22 (MKKPLRWLAALTALLLPLSALA).

It belongs to the TolB family. The Tol-Pal system is composed of five core proteins: the inner membrane proteins TolA, TolQ and TolR, the periplasmic protein TolB and the outer membrane protein Pal. They form a network linking the inner and outer membranes and the peptidoglycan layer.

Its subcellular location is the periplasm. Functionally, part of the Tol-Pal system, which plays a role in outer membrane invagination during cell division and is important for maintaining outer membrane integrity. The protein is Tol-Pal system protein TolB of Xanthomonas axonopodis pv. citri (strain 306).